The sequence spans 177 residues: Ribosome maturation factor RimM (177 aa).

In terms of domain architecture, PRC barrel spans 98–171 (GETIFLSEIK…AVVMDLPEGL (74 aa)).

The protein belongs to the RimM family. In terms of assembly, binds ribosomal protein uS19.

It localises to the cytoplasm. Functionally, an accessory protein needed during the final step in the assembly of 30S ribosomal subunit, possibly for assembly of the head region. Essential for efficient processing of 16S rRNA. May be needed both before and after RbfA during the maturation of 16S rRNA. It has affinity for free ribosomal 30S subunits but not for 70S ribosomes. This Bdellovibrio bacteriovorus (strain ATCC 15356 / DSM 50701 / NCIMB 9529 / HD100) protein is Ribosome maturation factor RimM.